The sequence spans 778 residues: Ribosome biogenesis protein BOP1 homolog (778 aa).

The segment covering 1 to 10 (MAKKQDRKRK) has biased composition (basic residues). Residues 1–152 (MAKKQDRKRK…DSDTSDEEDI (152 aa)) are disordered. Acidic residues-rich tracts occupy residues 44 to 53 (EDSTDDEGID), 60 to 72 (SSED…DEEG), and 84 to 105 (SSDE…DEEE). A compositionally biased stretch (polar residues) spans 114–124 (TTSSKAETNNE). The segment covering 142–151 (EDSDTSDEED) has biased composition (acidic residues). 7 WD repeats span residues 438–479 (GHTD…RTIE), 481–519 (EDVV…KLLI), 564–606 (NHFK…SQIP), 609–647 (KSKG…LIKK), 650–689 (TNSK…KPYQ), 693–732 (LHRN…DLLQ), and 748–778 (RDDF…RLYT).

The protein belongs to the WD repeat BOP1/ERB1 family.

Its subcellular location is the nucleus. The protein localises to the nucleolus. It is found in the nucleoplasm. Its function is as follows. Required for maturation of ribosomal RNAs and formation of the large ribosomal subunit. The protein is Ribosome biogenesis protein BOP1 homolog of Drosophila willistoni (Fruit fly).